We begin with the raw amino-acid sequence, 548 residues long: MKNINPSQTSAWKALEQHFAQIKDIHLRELFEQDPDRFAKFSATFDDQILVDFSKNRITTETLKKLQALAKETDVAGAMRSLFSGEKINCTENRAVLHIALRNRSNTPMMVDGEDVMQQVNAVLAKMKDFSERVIHGEWKGYTGKGITDVVNIGIGGSDLGPYMVTEALKPYKNHLNMHFVSNVDGTHIAETLKALNPETTLFLIASKTFTTQETMTNAHSARDWFLKSAGDEGHIAKHFAALSTNGQEVKQFGIDTKNMFEFWDWVGGRYSLWSAIGLSIALSIGFENFEQLLSGAHAMDQHVANTPFEQNIPVLLALIGIWYNNFFGAETEAILPYDQYMHRFAAYFQQGNMESNGKYIDRNGHPVDYQTGPIIWGEPGTNGQHAFYQLIHQGTKLIPCDFIAPAISHNPLSDHHSKLLSNFFAQTEALAFGKSREQVDAEFATSGKTVVEVEHVAPFKVFEGNRPTNSILLREITPFSLGALIAMYEHKIFVQGAILNIFTFDQWGVELGKQLANRILPELKDDNRVVSHDSSTNGLINRFKAWR.

Residue Glu-355 is the Proton donor of the active site. Catalysis depends on residues His-386 and Lys-514.

It belongs to the GPI family.

Its subcellular location is the cytoplasm. The catalysed reaction is alpha-D-glucose 6-phosphate = beta-D-fructose 6-phosphate. It participates in carbohydrate biosynthesis; gluconeogenesis. Its pathway is carbohydrate degradation; glycolysis; D-glyceraldehyde 3-phosphate and glycerone phosphate from D-glucose: step 2/4. In terms of biological role, catalyzes the reversible isomerization of glucose-6-phosphate to fructose-6-phosphate. In Photorhabdus laumondii subsp. laumondii (strain DSM 15139 / CIP 105565 / TT01) (Photorhabdus luminescens subsp. laumondii), this protein is Glucose-6-phosphate isomerase.